A 288-amino-acid chain; its full sequence is Elongation factor Ts (288 aa).

The tract at residues 82–85 is involved in Mg(2+) ion dislocation from EF-Tu; that stretch reads TDFV.

It belongs to the EF-Ts family.

The protein resides in the cytoplasm. Functionally, associates with the EF-Tu.GDP complex and induces the exchange of GDP to GTP. It remains bound to the aminoacyl-tRNA.EF-Tu.GTP complex up to the GTP hydrolysis stage on the ribosome. The polypeptide is Elongation factor Ts (Chlorobium limicola (strain DSM 245 / NBRC 103803 / 6330)).